Consider the following 518-residue polypeptide: Flagellin (518 aa).

Belongs to the bacterial flagellin family.

Its subcellular location is the secreted. It localises to the bacterial flagellum. Flagellin is the subunit protein which polymerizes to form the filaments of bacterial flagella. This Aquifex aeolicus (strain VF5) protein is Flagellin (flaA).